A 472-amino-acid polypeptide reads, in one-letter code: Uronate isomerase (472 aa).

The protein belongs to the metallo-dependent hydrolases superfamily. Uronate isomerase family.

The catalysed reaction is D-glucuronate = D-fructuronate. It catalyses the reaction aldehydo-D-galacturonate = keto-D-tagaturonate. The protein operates within carbohydrate metabolism; pentose and glucuronate interconversion. This is Uronate isomerase from Shouchella clausii (strain KSM-K16) (Alkalihalobacillus clausii).